Here is a 102-residue protein sequence, read N- to C-terminus: Urease subunit beta (102 aa).

Belongs to the urease beta subunit family. As to quaternary structure, heterotrimer of UreA (gamma), UreB (beta) and UreC (alpha) subunits. Three heterotrimers associate to form the active enzyme.

The protein resides in the cytoplasm. It carries out the reaction urea + 2 H2O + H(+) = hydrogencarbonate + 2 NH4(+). It participates in nitrogen metabolism; urea degradation; CO(2) and NH(3) from urea (urease route): step 1/1. This Opitutus terrae (strain DSM 11246 / JCM 15787 / PB90-1) protein is Urease subunit beta.